A 1150-amino-acid chain; its full sequence is Pyruvate carboxylase (1150 aa).

In terms of domain architecture, Biotin carboxylation spans 3-455; the sequence is QIKKLLVANR…TTKFIEETPE (453 aa). ATP is bound by residues Lys119, Lys161, His211, and Glu278. Residues 123-319 enclose the ATP-grasp domain; it reads RTTAIKADLP…IVKTQILVAA (197 aa). Arg294 is a catalytic residue. The region spanning 533–802 is the Pyruvate carboxyltransferase domain; that stretch reads VLLTDTTFRD…HLRTDIEGME (270 aa). Residue 541–545 coordinates substrate; that stretch reads RDAHQ. Asp542, Lys712, His741, and His743 together coordinate Mn(2+). The residue at position 712 (Lys712) is an N6-carboxylysine. The 76-residue stretch at 1071 to 1146 folds into the Biotinyl-binding domain; the sequence is KADKSNPSHI…ATGDLLIEIE (76 aa). The residue at position 1112 (Lys1112) is an N6-biotinyllysine.

In terms of assembly, homotetramer. Biotin is required as a cofactor.

It catalyses the reaction hydrogencarbonate + pyruvate + ATP = oxaloacetate + ADP + phosphate + H(+). Catalyzes a 2-step reaction, involving the ATP-dependent carboxylation of the covalently attached biotin in the first step and the transfer of the carboxyl group to pyruvate in the second. This is Pyruvate carboxylase (pycA) from Staphylococcus aureus (strain Mu50 / ATCC 700699).